The sequence spans 657 residues: Endoplasmic reticulum mannosyl-oligosaccharide 1,2-alpha-mannosidase (657 aa).

The Cytoplasmic portion of the chain corresponds to 1-49 (MYPPPPAPAPHRDFISVTLSLGESYDNSKSRRRRSCWRKWKQLSRLQRN). The helical transmembrane segment at 50–70 (VILFVLGFLILCGFLYSLQVS) threads the bilayer. The Lumenal portion of the chain corresponds to 71–657 (DQWKALSGSR…AHPLPIWSPA (587 aa)). Ser101 is subject to Phosphoserine. The interval 118 to 157 (HLRRGPPHLQIRPPNTVSKDGMQDDAKEREAALGKAQQEE) is disordered. The segment covering 138 to 157 (GMQDDAKEREAALGKAQQEE) has biased composition (basic and acidic residues). Glu288 acts as the Proton donor in catalysis. The active site involves Asp421. Cys485 and Cys514 are oxidised to a cystine. The Proton donor role is filled by Glu528. Residue Glu557 is part of the active site. Thr646 is a binding site for Ca(2+).

It belongs to the glycosyl hydrolase 47 family. It depends on Ca(2+) as a cofactor.

Its subcellular location is the endoplasmic reticulum membrane. It catalyses the reaction N(4)-(alpha-D-Man-(1-&gt;2)-alpha-D-Man-(1-&gt;2)-alpha-D-Man-(1-&gt;3)-[alpha-D-Man-(1-&gt;2)-alpha-D-Man-(1-&gt;3)-[alpha-D-Man-(1-&gt;2)-alpha-D-Man-(1-&gt;6)]-alpha-D-Man-(1-&gt;6)]-beta-D-Man-(1-&gt;4)-beta-D-GlcNAc-(1-&gt;4)-beta-D-GlcNAc)-L-asparaginyl-[protein] (N-glucan mannose isomer 9A1,2,3B1,2,3) + 4 H2O = N(4)-(alpha-D-Man-(1-&gt;3)-[alpha-D-Man-(1-&gt;3)-[alpha-D-Man-(1-&gt;6)]-alpha-D-Man-(1-&gt;6)]-beta-D-Man-(1-&gt;4)-beta-D-GlcNAc-(1-&gt;4)-beta-D-GlcNAc)-L-asparaginyl-[protein] (N-glucan mannose isomer 5A1,2) + 4 beta-D-mannose. The catalysed reaction is N(4)-(alpha-D-Man-(1-&gt;2)-alpha-D-Man-(1-&gt;2)-alpha-D-Man-(1-&gt;3)-[alpha-D-Man-(1-&gt;3)-[alpha-D-Man-(1-&gt;2)-alpha-D-Man-(1-&gt;6)]-alpha-D-Man-(1-&gt;6)]-beta-D-Man-(1-&gt;4)-beta-D-GlcNAc-(1-&gt;4)-beta-D-GlcNAc)-L-asparaginyl-[protein] (N-glucan mannose isomer 8A1,2,3B1,3) + 3 H2O = N(4)-(alpha-D-Man-(1-&gt;3)-[alpha-D-Man-(1-&gt;3)-[alpha-D-Man-(1-&gt;6)]-alpha-D-Man-(1-&gt;6)]-beta-D-Man-(1-&gt;4)-beta-D-GlcNAc-(1-&gt;4)-beta-D-GlcNAc)-L-asparaginyl-[protein] (N-glucan mannose isomer 5A1,2) + 3 beta-D-mannose. The protein operates within protein modification; protein glycosylation. Functionally, involved in glycoprotein quality control targeting of misfolded glycoproteins for degradation. It primarily trims a single alpha-1,2-linked mannose residue from Man(9)GlcNAc(2) to produce Man(8)GlcNAc(2), but at high enzyme concentrations, as found in the ER quality control compartment (ERQC), it further trims the carbohydrates to Man(5-6)GlcNAc(2). This chain is Endoplasmic reticulum mannosyl-oligosaccharide 1,2-alpha-mannosidase (Man1b1), found in Rattus norvegicus (Rat).